Consider the following 357-residue polypeptide: UDP-N-acetylglucosamine--N-acetylmuramyl-(pentapeptide) pyrophosphoryl-undecaprenol N-acetylglucosamine transferase (357 aa).

UDP-N-acetyl-alpha-D-glucosamine-binding positions include 14 to 16 (TAG), Arg-168, Ser-198, and Gln-292.

This sequence belongs to the glycosyltransferase 28 family. MurG subfamily.

Its subcellular location is the cell membrane. It catalyses the reaction di-trans,octa-cis-undecaprenyl diphospho-N-acetyl-alpha-D-muramoyl-L-alanyl-D-glutamyl-meso-2,6-diaminopimeloyl-D-alanyl-D-alanine + UDP-N-acetyl-alpha-D-glucosamine = di-trans,octa-cis-undecaprenyl diphospho-[N-acetyl-alpha-D-glucosaminyl-(1-&gt;4)]-N-acetyl-alpha-D-muramoyl-L-alanyl-D-glutamyl-meso-2,6-diaminopimeloyl-D-alanyl-D-alanine + UDP + H(+). Its pathway is cell wall biogenesis; peptidoglycan biosynthesis. Functionally, cell wall formation. Catalyzes the transfer of a GlcNAc subunit on undecaprenyl-pyrophosphoryl-MurNAc-pentapeptide (lipid intermediate I) to form undecaprenyl-pyrophosphoryl-MurNAc-(pentapeptide)GlcNAc (lipid intermediate II). This Oceanobacillus iheyensis (strain DSM 14371 / CIP 107618 / JCM 11309 / KCTC 3954 / HTE831) protein is UDP-N-acetylglucosamine--N-acetylmuramyl-(pentapeptide) pyrophosphoryl-undecaprenol N-acetylglucosamine transferase.